Reading from the N-terminus, the 302-residue chain is Succinate--CoA ligase [ADP-forming] subunit alpha (302 aa).

Residues 17 to 20 (TGST), K43, and 96 to 98 (ITE) contribute to the CoA site. A substrate-binding site is contributed by Y159. H247 acts as the Tele-phosphohistidine intermediate in catalysis.

Belongs to the succinate/malate CoA ligase alpha subunit family. Heterotetramer of two alpha and two beta subunits.

It carries out the reaction succinate + ATP + CoA = succinyl-CoA + ADP + phosphate. The enzyme catalyses GTP + succinate + CoA = succinyl-CoA + GDP + phosphate. The protein operates within carbohydrate metabolism; tricarboxylic acid cycle; succinate from succinyl-CoA (ligase route): step 1/1. Functionally, succinyl-CoA synthetase functions in the citric acid cycle (TCA), coupling the hydrolysis of succinyl-CoA to the synthesis of either ATP or GTP and thus represents the only step of substrate-level phosphorylation in the TCA. The alpha subunit of the enzyme binds the substrates coenzyme A and phosphate, while succinate binding and nucleotide specificity is provided by the beta subunit. In Staphylococcus aureus (strain COL), this protein is Succinate--CoA ligase [ADP-forming] subunit alpha.